The chain runs to 126 residues: Large ribosomal subunit protein bL17 (126 aa).

This sequence belongs to the bacterial ribosomal protein bL17 family. In terms of assembly, part of the 50S ribosomal subunit. Contacts protein L32.

The protein is Large ribosomal subunit protein bL17 of Vibrio parahaemolyticus serotype O3:K6 (strain RIMD 2210633).